A 167-amino-acid chain; its full sequence is Putative pre-16S rRNA nuclease (167 aa).

The protein belongs to the YqgF nuclease family.

It is found in the cytoplasm. Its function is as follows. Could be a nuclease involved in processing of the 5'-end of pre-16S rRNA. The protein is Putative pre-16S rRNA nuclease of Streptomyces coelicolor (strain ATCC BAA-471 / A3(2) / M145).